A 365-amino-acid chain; its full sequence is UPF0324 membrane protein Cj0999c (365 aa).

11 helical membrane-spanning segments follow: residues 12-34, 44-63, 83-100, 105-127, 134-153, 163-185, 197-219, 234-256, 269-288, 303-325, and 338-360; these read IVRS…MYLS, HLAA…PWFF, LGIV…LLSV, FLLS…TKIF, SMLV…LALE, GILA…PIAF, AMGV…AEMA, VIIK…YFFA, SITI…LNTY, IISL…LGLQ, and VFGL…TLAF.

This sequence belongs to the UPF0324 family.

It is found in the cell membrane. This Campylobacter jejuni subsp. jejuni serotype O:2 (strain ATCC 700819 / NCTC 11168) protein is UPF0324 membrane protein Cj0999c.